We begin with the raw amino-acid sequence, 439 residues long: C4-dicarboxylate transport protein (439 aa).

The next 9 helical transmembrane spans lie at 10–30 (LYVQ…FYPP), 45–65 (LIKM…IAGM), 77–97 (LALL…LVLV), 145–165 (AFAK…GFAL), 185–205 (VLFA…FGAM), 223–243 (LMGT…GTIT), 290–310 (VVGL…AIYL), 332–352 (TLLA…GSGF), and 353–373 (IVLA…LALI). The interval 415–439 (LNGQTAEEASAPQALPDRMESRIHH) is disordered.

The protein belongs to the dicarboxylate/amino acid:cation symporter (DAACS) (TC 2.A.23) family.

The protein localises to the cell inner membrane. Its function is as follows. Responsible for the transport of dicarboxylates such as succinate, fumarate, and malate from the periplasm across the membrane. In Verminephrobacter eiseniae (strain EF01-2), this protein is C4-dicarboxylate transport protein.